The sequence spans 94 residues: Pyrimidine/purine nucleoside phosphorylase (94 aa).

It belongs to the nucleoside phosphorylase PpnP family.

It carries out the reaction a purine D-ribonucleoside + phosphate = a purine nucleobase + alpha-D-ribose 1-phosphate. It catalyses the reaction adenosine + phosphate = alpha-D-ribose 1-phosphate + adenine. The catalysed reaction is cytidine + phosphate = cytosine + alpha-D-ribose 1-phosphate. The enzyme catalyses guanosine + phosphate = alpha-D-ribose 1-phosphate + guanine. It carries out the reaction inosine + phosphate = alpha-D-ribose 1-phosphate + hypoxanthine. It catalyses the reaction thymidine + phosphate = 2-deoxy-alpha-D-ribose 1-phosphate + thymine. The catalysed reaction is uridine + phosphate = alpha-D-ribose 1-phosphate + uracil. The enzyme catalyses xanthosine + phosphate = alpha-D-ribose 1-phosphate + xanthine. Its function is as follows. Catalyzes the phosphorolysis of diverse nucleosides, yielding D-ribose 1-phosphate and the respective free bases. Can use uridine, adenosine, guanosine, cytidine, thymidine, inosine and xanthosine as substrates. Also catalyzes the reverse reactions. The chain is Pyrimidine/purine nucleoside phosphorylase from Pectobacterium carotovorum subsp. carotovorum (strain PC1).